A 215-amino-acid polypeptide reads, in one-letter code: UPF0502 protein CKO_01995 (215 aa).

It belongs to the UPF0502 family.

This Citrobacter koseri (strain ATCC BAA-895 / CDC 4225-83 / SGSC4696) protein is UPF0502 protein CKO_01995.